A 1183-amino-acid polypeptide reads, in one-letter code: Peroxisomal ATPase PEX6 (1183 aa).

A disordered region spans residues 161-205 (ESRGKKTGEPEDGPLANGIDLNGVDDSDSDEDVLSQGDDDDENNV). Residues 183–204 (GVDDSDSDEDVLSQGDDDDENN) are compositionally biased toward acidic residues. The segment at 576–785 (LPNNYISPVH…VERAMTACSE (210 aa)) is AAA-cassette D1. Residues 878–1070 (GILFYGPPGT…CSDAMLKAIT (193 aa)) form an AAA-cassette D2 region. 883 to 890 (GPPGTGKT) is a binding site for ATP. The tract at residues 1160 to 1183 (IMVDGPGTGGEGAFGDDGDEEGLY) is disordered. Residues 1173–1183 (FGDDGDEEGLY) show a composition bias toward acidic residues.

This sequence belongs to the AAA ATPase family. In terms of assembly, interacts with PEX1; forming the PEX1-PEX6 AAA ATPase complex, which is composed of a heterohexamer formed by a trimer of PEX1-PEX6 dimers.

It localises to the cytoplasm. It is found in the cytosol. The protein resides in the peroxisome membrane. The catalysed reaction is ATP + H2O = ADP + phosphate + H(+). In terms of biological role, component of the PEX1-PEX6 AAA ATPase complex, a protein dislocase complex that mediates the ATP-dependent extraction of the PEX5 receptor from peroxisomal membranes, an essential step for PEX5 recycling. Specifically recognizes PEX5 monoubiquitinated at 'Cys-6', and pulls it out of the peroxisome lumen through the PEX2-PEX10-PEX12 retrotranslocation channel. Extraction by the PEX1-PEX6 AAA ATPase complex is accompanied by unfolding of the TPR repeats and release of bound cargo from PEX5. Regulates autophagy and biogenesis of peroxisomes and Woronin bodies. Plays important roles in mycelial growth and development and stress response. Is also essential for conidiation and fatty acid utilization. Required for nematode predation via trap formation. The sequence is that of Peroxisomal ATPase PEX6 from Arthrobotrys oligospora (strain ATCC 24927 / CBS 115.81 / DSM 1491) (Nematode-trapping fungus).